A 1832-amino-acid chain; its full sequence is Multifunctional protein pyr-3 (1832 aa).

A GATase (Glutamine amidotransferase) region spans residues Ala-2–Phe-400. Positions 64, 273, and 275 each coordinate L-glutamine. Positions Arg-228–Asp-413 constitute a Glutamine amidotransferase type-1 domain. Cys-302 serves as the catalytic Nucleophile; for GATase activity. L-glutamine is bound by residues Leu-303, Gln-306, Asn-344, Gly-346, and Tyr-347. Catalysis depends on for GATase activity residues His-386 and Glu-388. A linker region spans residues Asp-401–Lys-442. The CPSase A stretch occupies residues Val-443–Arg-983. A CPSase (Carbamoyl phosphate synthase) region spans residues Val-443–Val-1484. 12 residues coordinate ATP: Arg-560, Arg-600, Gly-606, Gly-607, Arg-637, Met-639, Glu-644, Gly-670, Ile-671, His-672, Gln-713, and Glu-727. ATP-grasp domains lie at Ala-564–Leu-756 and Ser-1102–Met-1293. 3 residues coordinate Mg(2+): Gln-713, Glu-727, and Asn-729. 3 residues coordinate Mn(2+): Gln-713, Glu-727, and Asn-729. The CPSase B stretch occupies residues Gly-984 to Val-1484. ATP is bound by residues Arg-1138, Lys-1177, Ile-1179, Glu-1184, Gly-1209, Val-1210, His-1211, Ser-1212, Gln-1252, and Glu-1264. Mg(2+)-binding residues include Gln-1252, Glu-1264, and Asn-1266. Positions 1252, 1264, and 1266 each coordinate Mn(2+). In terms of domain architecture, MGS-like spans Phe-1359 to Leu-1507. The interval Glu-1485–Lys-1528 is linker. The ATCase (Aspartate transcarbamylase) stretch occupies residues Lys-1529–Gly-1832. 2 residues coordinate carbamoyl phosphate: Arg-1581 and Thr-1582. Lys-1609 is a binding site for L-aspartate. Positions 1630, 1658, and 1661 each coordinate carbamoyl phosphate. The L-aspartate site is built by Arg-1691 and Arg-1754. Carbamoyl phosphate contacts are provided by Leu-1793 and Pro-1794.

The protein in the N-terminal section; belongs to the CarA family. In the central section; belongs to the CarB family. This sequence in the C-terminal section; belongs to the aspartate/ornithine carbamoyltransferase superfamily. ATCase family. The cofactor is Mg(2+). It depends on Mn(2+) as a cofactor.

It is found in the cytoplasm. The protein resides in the nucleus. It catalyses the reaction hydrogencarbonate + L-glutamine + 2 ATP + H2O = carbamoyl phosphate + L-glutamate + 2 ADP + phosphate + 2 H(+). The catalysed reaction is L-glutamine + H2O = L-glutamate + NH4(+). It carries out the reaction hydrogencarbonate + NH4(+) + 2 ATP = carbamoyl phosphate + 2 ADP + phosphate + 2 H(+). The enzyme catalyses carbamoyl phosphate + L-aspartate = N-carbamoyl-L-aspartate + phosphate + H(+). It participates in pyrimidine metabolism; UMP biosynthesis via de novo pathway; (S)-dihydroorotate from bicarbonate: step 1/3. Its pathway is pyrimidine metabolism; UMP biosynthesis via de novo pathway; (S)-dihydroorotate from bicarbonate: step 2/3. Both CPSase and ATCase activities are feedback inhibited by the end product UTP. In terms of biological role, multifunctional protein that encodes the first 2 enzymatic activities of the de novo pyrimidine pathway: carbamoylphosphate synthetase (CPSase; EC 6.3.5.5) and aspartate transcarbamylase (ATCase; EC 2.1.3.2). The CPSase-function is accomplished in 2 steps, by a glutamine-dependent amidotransferase activity (GATase) that binds and cleaves glutamine to produce ammonia, followed by an ammonium-dependent carbamoyl phosphate synthetase, which reacts with the ammonia, hydrogencarbonate and ATP to form carbamoyl phosphate. The endogenously produced carbamoyl phosphate is sequestered and channeled to the ATCase active site. ATCase then catalyzes the formation of carbamoyl-L-aspartate from L-aspartate and carbamoyl phosphate. This chain is Multifunctional protein pyr-3 (pyr-3), found in Neurospora crassa (strain ATCC 24698 / 74-OR23-1A / CBS 708.71 / DSM 1257 / FGSC 987).